A 415-amino-acid polypeptide reads, in one-letter code: 1-deoxy-D-xylulose 5-phosphate reductoisomerase (415 aa).

NADPH contacts are provided by Thr10, Gly11, Ser12, Ile13, Gly36, Arg37, Asn38, and Asn128. Lys129 is a 1-deoxy-D-xylulose 5-phosphate binding site. NADPH is bound at residue Glu130. Residue Asp154 participates in Mn(2+) binding. Positions 155, 156, 192, and 215 each coordinate 1-deoxy-D-xylulose 5-phosphate. A Mn(2+)-binding site is contributed by Glu156. An NADPH-binding site is contributed by Gly221. Residues Ser228, Asn233, Lys234, and Glu237 each coordinate 1-deoxy-D-xylulose 5-phosphate. Glu237 lines the Mn(2+) pocket.

The protein belongs to the DXR family. Requires Mg(2+) as cofactor. The cofactor is Mn(2+).

The enzyme catalyses 2-C-methyl-D-erythritol 4-phosphate + NADP(+) = 1-deoxy-D-xylulose 5-phosphate + NADPH + H(+). It functions in the pathway isoprenoid biosynthesis; isopentenyl diphosphate biosynthesis via DXP pathway; isopentenyl diphosphate from 1-deoxy-D-xylulose 5-phosphate: step 1/6. Functionally, catalyzes the NADPH-dependent rearrangement and reduction of 1-deoxy-D-xylulose-5-phosphate (DXP) to 2-C-methyl-D-erythritol 4-phosphate (MEP). This is 1-deoxy-D-xylulose 5-phosphate reductoisomerase from Synechococcus sp. (strain CC9605).